Consider the following 622-residue polypeptide: Arginine--tRNA ligase (622 aa).

A 'HIGH' region motif is present at residues 127–137; the sequence is ANPVHPLHVGH.

The protein belongs to the class-I aminoacyl-tRNA synthetase family.

Its subcellular location is the cytoplasm. It carries out the reaction tRNA(Arg) + L-arginine + ATP = L-arginyl-tRNA(Arg) + AMP + diphosphate. The chain is Arginine--tRNA ligase from Ignicoccus hospitalis (strain KIN4/I / DSM 18386 / JCM 14125).